The primary structure comprises 313 residues: MFIIYLFIFLSSAIIDSNGVAMAQKIEAIGGKGGKRWDDGANDNVAKVYIRGDHEGIQYIKFDYVKDGQSFNGSVHGVSADGFTQTFEIDHLQYEQIVSVEGYYDWKTGVMQALQFKTNLKTSEFIGYQKGTKFSLGVDGKVIVGFHGSAWRSLRSLGAYVKTAPTKSELQGGITGGEYWDDGPNFDGVRKVYVTFTETHIRSMNIDYDQDGQVVTRYHGMKNGETQEFAVDFPNEYMTSVEGTYDHISEGNYLVLTSLTFKTSKGRISQTFGLVIGTKFVLETKGNVISGFHGRDGGSFDAIGVYFSPMISS.

An N-terminal signal peptide occupies residues 1 to 23 (MFIIYLFIFLSSAIIDSNGVAMA). Jacalin-type lectin domains are found at residues 24-163 (QKIE…YVKT) and 165-309 (PTKS…YFSP).

Belongs to the jacalin lectin family.

The protein is Jacalin-related lectin 8 (JAL8) of Arabidopsis thaliana (Mouse-ear cress).